The sequence spans 33 residues: Kappa-theraphotoxin-Pg2a (33 aa).

3 disulfide bridges follow: Cys2/Cys16, Cys9/Cys21, and Cys15/Cys28.

As to expression, expressed by the venom gland.

The protein localises to the secreted. In terms of biological role, gating modifier of Kv2.1/KCNB1 channels. The protein is Kappa-theraphotoxin-Pg2a of Chilobrachys guangxiensis (Chinese earth tiger tarantula).